The sequence spans 446 residues: tRNA-2-methylthio-N(6)-dimethylallyladenosine synthase (446 aa).

In terms of domain architecture, MTTase N-terminal spans 3 to 120 (KKLFIETHGC…LPEMIDAARS (118 aa)). C12, C49, C83, C157, C161, and C164 together coordinate [4Fe-4S] cluster. The Radical SAM core domain occupies 143 to 375 (RVDGPTAFVS…QSRIHQQGYE (233 aa)). The TRAM domain maps to 378-442 (RRMVGSTQRI…PHSLRGTLID (65 aa)).

Belongs to the methylthiotransferase family. MiaB subfamily. In terms of assembly, monomer. [4Fe-4S] cluster serves as cofactor.

The protein resides in the cytoplasm. It catalyses the reaction N(6)-dimethylallyladenosine(37) in tRNA + (sulfur carrier)-SH + AH2 + 2 S-adenosyl-L-methionine = 2-methylsulfanyl-N(6)-dimethylallyladenosine(37) in tRNA + (sulfur carrier)-H + 5'-deoxyadenosine + L-methionine + A + S-adenosyl-L-homocysteine + 2 H(+). Catalyzes the methylthiolation of N6-(dimethylallyl)adenosine (i(6)A), leading to the formation of 2-methylthio-N6-(dimethylallyl)adenosine (ms(2)i(6)A) at position 37 in tRNAs that read codons beginning with uridine. The sequence is that of tRNA-2-methylthio-N(6)-dimethylallyladenosine synthase from Pseudomonas aeruginosa (strain UCBPP-PA14).